The sequence spans 198 residues: Dynactin subunit 5 (198 aa).

The span at 179 to 188 shows a compositional bias: polar residues; sequence NTPASKGLPS. The segment at 179-198 is disordered; the sequence is NTPASKGLPSTPTKLQTTTT. The segment covering 189 to 198 has biased composition (low complexity); the sequence is TPTKLQTTTT.

This sequence belongs to the dynactin subunits 5/6 family. Dynactin subunit 5 subfamily. Member of the pointed-end complex of the dynactin shoulder complex.

The protein resides in the cytoplasm. The protein localises to the cytoskeleton. This is Dynactin subunit 5 (dynE) from Dictyostelium discoideum (Social amoeba).